The sequence spans 308 residues: Glutamyl-Q tRNA(Asp) synthetase (308 aa).

Residues 19-23 (RFAPS) and glutamate 55 each bind L-glutamate. The 'HIGH' region signature appears at 22 to 32 (PSPSGELHFGS). Zn(2+) contacts are provided by cysteine 111, cysteine 113, tyrosine 125, and cysteine 129. L-glutamate-binding residues include tyrosine 182 and arginine 200. The 'KMSKS' region signature appears at 238–242 (KLSKQ). Lysine 241 provides a ligand contact to ATP.

Belongs to the class-I aminoacyl-tRNA synthetase family. GluQ subfamily. The cofactor is Zn(2+).

Catalyzes the tRNA-independent activation of glutamate in presence of ATP and the subsequent transfer of glutamate onto a tRNA(Asp). Glutamate is transferred on the 2-amino-5-(4,5-dihydroxy-2-cyclopenten-1-yl) moiety of the queuosine in the wobble position of the QUC anticodon. The sequence is that of Glutamyl-Q tRNA(Asp) synthetase from Escherichia coli (strain K12 / MC4100 / BW2952).